Here is an 85-residue protein sequence, read N- to C-terminus: UPF0386 protein RHE_CH01859 (85 aa).

Belongs to the UPF0386 family.

The sequence is that of UPF0386 protein RHE_CH01859 from Rhizobium etli (strain ATCC 51251 / DSM 11541 / JCM 21823 / NBRC 15573 / CFN 42).